The sequence spans 485 residues: E3 ubiquitin-protein ligase TRIM34A (485 aa).

The segment at 15–59 adopts an RING-type zinc-finger fold; it reads CPVCQELLTKALSLGCGHRVCQACLITKKNAVINPREKSSCPVCG. The segment at 91–132 adopts a B box-type zinc-finger fold; that stretch reads TKRDLCVHHGEKLLLFCKEDKKAICWVCERSQEHRGHHTFLW. Cys-96, His-99, Cys-118, and His-124 together coordinate Zn(2+). Positions 136-170 form a coiled coil; it reads VRECQENLQKALTRLRKEQEKVETLEADIKEDRLS. The 204-residue stretch at 282 to 485 folds into the B30.2/SPRY domain; that stretch reads LSGMLQKFRE…APMTLCPLNS (204 aa).

This sequence belongs to the TRIM/RBCC family. Homotrimer. Interacts (via B-box and SPRY domain) with TRIM5.

The protein resides in the cytoplasm. The protein localises to the mitochondrion. The catalysed reaction is S-ubiquitinyl-[E2 ubiquitin-conjugating enzyme]-L-cysteine + [acceptor protein]-L-lysine = [E2 ubiquitin-conjugating enzyme]-L-cysteine + N(6)-ubiquitinyl-[acceptor protein]-L-lysine.. It functions in the pathway protein modification; protein ubiquitination. Its function is as follows. Functions as antiviral protein and contributes to the defense against retroviral infections. Acts as a capsid-specific restriction factor with the help of TRIM5 and prevents infection from non-host-adapted retroviruses. During influenza A virus infection, promotes programmed cell death by targeting ZBP1 for 'Lys-63'-linked polyubiquitination. In turn, promotes ZBP1 recruitment of RIPK3 to mediate virus-induced programmed necrosis. Negatively regulates the function of mitochondria by enhancing mitochondrial depolarization leading to cytochrome c release and mitochondria-dependent apoptosis. Also promotes the formation of multinucleated giant cells by means of cell fusion and phagocytosis in epithelial cells. Plays an essential role in sustaining the integrity of the inner mucus layer in the colon by controlling the exocytosis of the major component of colonic mucus MUC2 from colonic goblet cells. This chain is E3 ubiquitin-protein ligase TRIM34A, found in Mus musculus (Mouse).